Consider the following 85-residue polypeptide: Large ribosomal subunit protein eL34 (85 aa).

Belongs to the eukaryotic ribosomal protein eL34 family.

The protein is Large ribosomal subunit protein eL34 of Saccharolobus islandicus (strain Y.N.15.51 / Yellowstone #2) (Sulfolobus islandicus).